A 474-amino-acid chain; its full sequence is mRNA cap guanine-N(7) methyltransferase (474 aa).

A compositionally biased stretch (polar residues) spans 1–12 (MSTDSYTPSQEP). Positions 1 to 106 (MSTDSYTPSQ…GHEGDEGDED (106 aa)) are disordered. Residues 56–100 (SDIDGKYDKYGERRNAHTTTRDSRLDRLKRVRQKSAEREDVGHEG) are compositionally biased toward basic and acidic residues. The 305-residue stretch at 170 to 474 (SPIYKMRNFN…FYIGFVFEKV (305 aa)) folds into the mRNA cap 0 methyltransferase domain. 179–180 (NN) is a binding site for mRNA. Lys183, Cys207, Asp229, Asp269, Gln299, and Tyr304 together coordinate S-adenosyl-L-methionine.

This sequence belongs to the class I-like SAM-binding methyltransferase superfamily. mRNA cap 0 methyltransferase family.

The protein resides in the nucleus. The enzyme catalyses a 5'-end (5'-triphosphoguanosine)-ribonucleoside in mRNA + S-adenosyl-L-methionine = a 5'-end (N(7)-methyl 5'-triphosphoguanosine)-ribonucleoside in mRNA + S-adenosyl-L-homocysteine. Responsible for methylating the 5'-cap structure of mRNAs. This Candida albicans (strain SC5314 / ATCC MYA-2876) (Yeast) protein is mRNA cap guanine-N(7) methyltransferase (ABD1).